The following is a 209-amino-acid chain: UPF0319 protein VFMJ11_1730 (209 aa).

The signal sequence occupies residues Met1–Ala21.

The protein belongs to the UPF0319 family.

The chain is UPF0319 protein VFMJ11_1730 from Aliivibrio fischeri (strain MJ11) (Vibrio fischeri).